The primary structure comprises 308 residues: Ribosomal RNA small subunit methyltransferase H (308 aa).

S-adenosyl-L-methionine contacts are provided by residues 32–34 (GGH), Asp52, Phe78, Asp100, and Gln107.

This sequence belongs to the methyltransferase superfamily. RsmH family.

Its subcellular location is the cytoplasm. It catalyses the reaction cytidine(1402) in 16S rRNA + S-adenosyl-L-methionine = N(4)-methylcytidine(1402) in 16S rRNA + S-adenosyl-L-homocysteine + H(+). Its function is as follows. Specifically methylates the N4 position of cytidine in position 1402 (C1402) of 16S rRNA. This Legionella pneumophila (strain Paris) protein is Ribosomal RNA small subunit methyltransferase H.